The sequence spans 404 residues: uncharacterized protein (404 aa).

This sequence belongs to the lymphocryptovirus BTRF1 family.

This is an uncharacterized protein from Epstein-Barr virus (strain GD1) (HHV-4).